The following is a 749-amino-acid chain: uncharacterized protein (749 aa).

Residues 63–243 (FQYVQKGESI…QLTGKPMRLV (181 aa)) form the Helicase ATP-binding domain. 76 to 83 (TPTASGKT) is a binding site for ATP. Residues 185 to 188 (DELH) carry the DEVH box motif. The Helicase C-terminal domain maps to 276–430 (EVNELAKEFL…SARINPENLI (155 aa)).

This sequence belongs to the helicase family.

This is an uncharacterized protein from Bacillus subtilis (strain 168).